Consider the following 975-residue polypeptide: Monofunctional C1-tetrahydrofolate synthase, mitochondrial (975 aa).

A mitochondrion-targeting transit peptide spans 1 to 30 (MSARLPFVLRRLARPQHPGSPRRLPSLCRA). The interval 13–45 (ARPQHPGSPRRLPSLCRASSGRGSGCGGGEGLL) is disordered. The methylenetetrahydrofolate dehydrogenase and cyclohydrolase stretch occupies residues 31–345 (SSGRGSGCGG…REQQHRRWRL (315 aa)). A compositionally biased stretch (gly residues) spans 34-44 (RGSGCGGGEGL). K187 is modified (N6-acetyllysine; alternate). Position 187 is an N6-succinyllysine; alternate (K187). A formyltetrahydrofolate synthetase region spans residues 346–975 (HCLKLQPLSP…TETEQVKGLF (630 aa)). Residue S354 is modified to Phosphoserine. 420–427 (TPLGEGKS) is a binding site for ATP. K593 carries the N6-succinyllysine modification.

This sequence in the N-terminal section; belongs to the tetrahydrofolate dehydrogenase/cyclohydrolase family. The protein in the C-terminal section; belongs to the formate--tetrahydrofolate ligase family. In terms of assembly, homodimer.

It localises to the mitochondrion. It carries out the reaction (6S)-5,6,7,8-tetrahydrofolate + formate + ATP = (6R)-10-formyltetrahydrofolate + ADP + phosphate. The protein operates within one-carbon metabolism; tetrahydrofolate interconversion. May provide the missing metabolic reaction required to link the mitochondria and the cytoplasm in the mammalian model of one-carbon folate metabolism complementing thus the enzymatic activities of MTHFD2. This is Monofunctional C1-tetrahydrofolate synthase, mitochondrial (MTHFD1L) from Bos taurus (Bovine).